The primary structure comprises 258 residues: Protein STAY-GREEN LIKE, chloroplastic (258 aa).

It belongs to the staygreen family. In terms of tissue distribution, strongly expressed in leaves, stems and panicles, and at lower levels in roots and seeds.

In terms of biological role, promotes chlorophyll degradation in leaves. May be involved in LHCI proteins degradation, regulating the balance between LHCI and LHCII. The protein is Protein STAY-GREEN LIKE, chloroplastic of Oryza sativa subsp. japonica (Rice).